Consider the following 727-residue polypeptide: Glycerol-3-phosphate dehydrogenase, mitochondrial (727 aa).

A mitochondrion-targeting transit peptide spans 1-42; the sequence is MAFQKVVKGTILMGGGALATVLGLSQFAHYRRKQVSLAYVEA. 71 to 99 serves as a coordination point for FAD; the sequence is DILVIGGGATGCGCALDAVTRGLKTALVE. Tyrosine 601 bears the Phosphotyrosine mark. EF-hand domains are found at residues 623-658 and 659-694; these read PDID…INVQ and MDED…VHTG. Aspartate 672, asparagine 674, asparagine 676, glutamine 678, and glutamate 683 together coordinate Ca(2+).

This sequence belongs to the FAD-dependent glycerol-3-phosphate dehydrogenase family. FAD serves as cofactor.

It is found in the mitochondrion. The enzyme catalyses a quinone + sn-glycerol 3-phosphate = dihydroxyacetone phosphate + a quinol. The protein operates within polyol metabolism; glycerol degradation via glycerol kinase pathway; glycerone phosphate from sn-glycerol 3-phosphate (anaerobic route): step 1/1. With respect to regulation, calcium-binding enhance the activity of the enzyme. Calcium-responsive mitochondrial glycerol-3-phosphate dehydrogenase which seems to be a key component of the pancreatic beta-cell glucose-sensing device. In Rattus norvegicus (Rat), this protein is Glycerol-3-phosphate dehydrogenase, mitochondrial.